The chain runs to 425 residues: Kynurenine/alpha-aminoadipate aminotransferase, mitochondrial (425 aa).

The transit peptide at 1–29 (MNYSRFLTATSLARKTSPIRATVEIMSRA) directs the protein to the mitochondrion. R20 provides a ligand contact to substrate. S40 is modified (phosphoserine). Residues Y74 and Y142 each coordinate substrate. An N6-succinyllysine modification is found at K172. K179 bears the N6-acetyllysine mark. Basic and acidic residues predominate over residues 179–188 (KPEDSKDPTK). The tract at residues 179–208 (KPEDSKDPTKRTPKFLYTIPNGNNPTGNSL) is disordered. Residues 198–208 (PNGNNPTGNSL) are compositionally biased toward polar residues. N202 is a substrate binding site. Residue K263 is modified to N6-(pyridoxal phosphate)lysine; alternate. N6-acetyllysine; alternate is present on residues K263 and K339. N6-succinyllysine; alternate is present on residues K263 and K339. Residue K351 is modified to N6-acetyllysine. K367 bears the N6-acetyllysine; alternate mark. Position 367 is an N6-succinyllysine; alternate (K367). R399 is a substrate binding site. K422 carries the N6-acetyllysine modification.

Belongs to the class-I pyridoxal-phosphate-dependent aminotransferase family. As to quaternary structure, homodimer. It depends on pyridoxal 5'-phosphate as a cofactor. The N-terminus is blocked.

It localises to the mitochondrion. It carries out the reaction L-kynurenine + 2-oxoglutarate = kynurenate + L-glutamate + H2O. The catalysed reaction is L-2-aminoadipate + 2-oxoglutarate = 2-oxoadipate + L-glutamate. It catalyses the reaction glycine + 2-oxoglutarate = glyoxylate + L-glutamate. The enzyme catalyses L-kynurenine + glyoxylate = kynurenate + glycine + H2O. It carries out the reaction 3-hydroxy-L-kynurenine + glyoxylate = xanthurenate + glycine + H2O. The catalysed reaction is 2-oxohexanoate + L-kynurenine = L-2-aminohexanoate + kynurenate + H2O. It catalyses the reaction 3-phenylpyruvate + L-kynurenine = kynurenate + L-phenylalanine + H2O. The enzyme catalyses 4-methylsulfanyl-2-oxobutanoate + L-kynurenine = kynurenate + L-methionine + H2O. It carries out the reaction 2-oxo-3-sulfanylpropanoate + L-kynurenine = kynurenate + L-cysteine + H2O. The catalysed reaction is indole-3-pyruvate + L-kynurenine = kynurenate + L-tryptophan + H2O. It catalyses the reaction 2-oxopentanoate + L-kynurenine = L-2-aminopentanoate + kynurenate + H2O. The enzyme catalyses 4-methyl-2-oxopentanoate + L-kynurenine = kynurenate + L-leucine + H2O. It carries out the reaction glyoxylate + L-methionine = 4-methylsulfanyl-2-oxobutanoate + glycine. The catalysed reaction is L-2-aminoadipate + glyoxylate = 2-oxoadipate + glycine. It catalyses the reaction L-tyrosine + glyoxylate = 3-(4-hydroxyphenyl)pyruvate + glycine. The enzyme catalyses glyoxylate + L-phenylalanine = 3-phenylpyruvate + glycine. It carries out the reaction L-tryptophan + glyoxylate = indole-3-pyruvate + glycine. The catalysed reaction is L-leucine + glyoxylate = 4-methyl-2-oxopentanoate + glycine. It catalyses the reaction 2-oxobutanoate + L-kynurenine = (2S)-2-aminobutanoate + kynurenate + H2O. The enzyme catalyses 2-oxoadipate + L-kynurenine = L-2-aminoadipate + kynurenate + H2O. It carries out the reaction 2-oxoadipate + L-kynurenine = 4-(2-aminophenyl)-2,4-dioxobutanoate + L-2-aminoadipate. The protein operates within amino-acid degradation; L-lysine degradation via saccharopine pathway; glutaryl-CoA from L-lysine: step 4/6. Transaminase with broad substrate specificity. Has transaminase activity towards aminoadipate, kynurenine, methionine and glutamate. Shows activity also towards tryptophan, aspartate and hydroxykynurenine. Accepts a variety of oxo-acids as amino-group acceptors, with a preference for 2-oxoglutarate, 2-oxocaproic acid, phenylpyruvate and alpha-oxo-gamma-methiol butyric acid. Can also use glyoxylate as amino-group acceptor (in vitro). This is Kynurenine/alpha-aminoadipate aminotransferase, mitochondrial from Rattus norvegicus (Rat).